The sequence spans 568 residues: Glucose-6-phosphate isomerase, cytosolic (568 aa).

E360 (proton donor) is an active-site residue. Active-site residues include H391 and K516.

This sequence belongs to the GPI family. In terms of assembly, homodimer.

The protein localises to the cytoplasm. It catalyses the reaction alpha-D-glucose 6-phosphate = beta-D-fructose 6-phosphate. Its pathway is carbohydrate degradation; glycolysis; D-glyceraldehyde 3-phosphate and glycerone phosphate from D-glucose: step 2/4. The chain is Glucose-6-phosphate isomerase, cytosolic (PGIC) from Oenothera sinuata var. hirsuta (Mexican evening primrose).